We begin with the raw amino-acid sequence, 701 residues long: UvrABC system protein B (701 aa).

A Helicase ATP-binding domain is found at 28–188 (RRIRAGERDV…VDVQYTRNDL (161 aa)). 41–48 (GATGTGKS) serves as a coordination point for ATP. The short motif at 94–117 (YYDYYQPEAYIAQTDTYIEKDSSI) is the Beta-hairpin element. The 167-residue stretch at 432-598 (QIDDLIGEIR…PLRKKIADIL (167 aa)) folds into the Helicase C-terminal domain. A disordered region spans residues 606–636 (DDTEAAESVPIGGSGRNSSRGRRAQGEPGRA). The UVR domain maps to 656–691 (ADLIKDLTSQMMVAARDLQFELAARFRDEIADLKKE).

This sequence belongs to the UvrB family. Forms a heterotetramer with UvrA during the search for lesions. Interacts with UvrC in an incision complex.

The protein resides in the cytoplasm. The UvrABC repair system catalyzes the recognition and processing of DNA lesions. A damage recognition complex composed of 2 UvrA and 2 UvrB subunits scans DNA for abnormalities. Upon binding of the UvrA(2)B(2) complex to a putative damaged site, the DNA wraps around one UvrB monomer. DNA wrap is dependent on ATP binding by UvrB and probably causes local melting of the DNA helix, facilitating insertion of UvrB beta-hairpin between the DNA strands. Then UvrB probes one DNA strand for the presence of a lesion. If a lesion is found the UvrA subunits dissociate and the UvrB-DNA preincision complex is formed. This complex is subsequently bound by UvrC and the second UvrB is released. If no lesion is found, the DNA wraps around the other UvrB subunit that will check the other stand for damage. This chain is UvrABC system protein B, found in Mycobacterium ulcerans (strain Agy99).